A 379-amino-acid polypeptide reads, in one-letter code: Putative F-box protein At2g33190 (379 aa).

Residues 6–53 enclose the F-box domain; it reads NGWSKLYPDLLRSIFESLSCLDFHRAGTVCSNWYAVSRSCPLYPWRIV.

The chain is Putative F-box protein At2g33190 from Arabidopsis thaliana (Mouse-ear cress).